The chain runs to 346 residues: UDP-N-acetylenolpyruvoylglucosamine reductase (346 aa).

In terms of domain architecture, FAD-binding PCMH-type spans 22 to 194 (GFDVRARFAC…TSVTFRLPKV (173 aa)). Arg170 is an active-site residue. Ser246 serves as the catalytic Proton donor. Residue Glu342 is part of the active site.

The protein belongs to the MurB family. Requires FAD as cofactor.

The protein localises to the cytoplasm. It carries out the reaction UDP-N-acetyl-alpha-D-muramate + NADP(+) = UDP-N-acetyl-3-O-(1-carboxyvinyl)-alpha-D-glucosamine + NADPH + H(+). The protein operates within cell wall biogenesis; peptidoglycan biosynthesis. Its function is as follows. Cell wall formation. This is UDP-N-acetylenolpyruvoylglucosamine reductase from Paraburkholderia xenovorans (strain LB400).